The following is a 179-amino-acid chain: Large ribosomal subunit protein uL5 (179 aa).

This sequence belongs to the universal ribosomal protein uL5 family. Part of the 50S ribosomal subunit; part of the 5S rRNA/L5/L18/L25 subcomplex. Contacts the 5S rRNA and the P site tRNA. Forms a bridge to the 30S subunit in the 70S ribosome.

In terms of biological role, this is one of the proteins that bind and probably mediate the attachment of the 5S RNA into the large ribosomal subunit, where it forms part of the central protuberance. In the 70S ribosome it contacts protein S13 of the 30S subunit (bridge B1b), connecting the 2 subunits; this bridge is implicated in subunit movement. Contacts the P site tRNA; the 5S rRNA and some of its associated proteins might help stabilize positioning of ribosome-bound tRNAs. This is Large ribosomal subunit protein uL5 from Idiomarina loihiensis (strain ATCC BAA-735 / DSM 15497 / L2-TR).